The following is a 230-amino-acid chain: Ribonuclease 3 (230 aa).

In terms of domain architecture, RNase III spans 5–125; that stretch reads YSRFYNILGY…VIGAIYLDSD (121 aa). Glu-40 contacts Mg(2+). Asp-44 is an active-site residue. 2 residues coordinate Mg(2+): Asp-111 and Glu-114. The active site involves Glu-114. The DRBM domain occupies 153–223; it reads DSKSKLQEIL…AEKMIEMLSQ (71 aa).

It belongs to the ribonuclease III family. In terms of assembly, homodimer. Requires Mg(2+) as cofactor.

The protein localises to the cytoplasm. It carries out the reaction Endonucleolytic cleavage to 5'-phosphomonoester.. Its function is as follows. Digests double-stranded RNA. Involved in the processing of primary rRNA transcript to yield the immediate precursors to the large and small rRNAs (23S and 16S). Processes some mRNAs, and tRNAs when they are encoded in the rRNA operon. Processes pre-crRNA and tracrRNA of type II CRISPR loci if present in the organism. This Francisella tularensis subsp. holarctica (strain LVS) protein is Ribonuclease 3.